Consider the following 398-residue polypeptide: S-adenosylmethionine synthase (398 aa).

H16 serves as a coordination point for ATP. A Mg(2+)-binding site is contributed by D18. Residue E51 coordinates K(+). 2 residues coordinate L-methionine: E64 and Q108. Residues 108 to 118 (QSADIAQGVDA) are flexible loop. ATP contacts are provided by residues 176-178 (DSK), 242-243 (KF), D251, 257-258 (RK), A274, and K278. Residue D251 coordinates L-methionine. K282 provides a ligand contact to L-methionine.

The protein belongs to the AdoMet synthase family. Homotetramer; dimer of dimers. It depends on Mg(2+) as a cofactor. K(+) serves as cofactor.

The protein localises to the cytoplasm. It carries out the reaction L-methionine + ATP + H2O = S-adenosyl-L-methionine + phosphate + diphosphate. The protein operates within amino-acid biosynthesis; S-adenosyl-L-methionine biosynthesis; S-adenosyl-L-methionine from L-methionine: step 1/1. In terms of biological role, catalyzes the formation of S-adenosylmethionine (AdoMet) from methionine and ATP. The overall synthetic reaction is composed of two sequential steps, AdoMet formation and the subsequent tripolyphosphate hydrolysis which occurs prior to release of AdoMet from the enzyme. The chain is S-adenosylmethionine synthase from Rhodopseudomonas palustris (strain HaA2).